Consider the following 24-residue polypeptide: U1-plectoxin-Pt1e (24 aa).

A disulfide bridge links cysteine 4 with cysteine 18.

It belongs to the neurotoxin 02 (plectoxin) family. 02 (plectoxin) subfamily. Post-translationally, contains 5 disulfide bonds. Expressed by the venom gland.

The protein localises to the secreted. Its function is as follows. Potent toxin that may paralyze and/or kill insect pests such as H.virescens (lepidoptera), S.exigua (beet armyworm) and M.sexta (tobacco hornworm). The polypeptide is U1-plectoxin-Pt1e (Plectreurys tristis (Spider)).